Here is a 225-residue protein sequence, read N- to C-terminus: Membrane protein LapB (225 aa).

The protein to H.influenzae HI_1119.

The protein resides in the cell membrane. This chain is Membrane protein LapB (lapB), found in Mannheimia haemolytica (Pasteurella haemolytica).